A 170-amino-acid polypeptide reads, in one-letter code: Small capsomere-interacting protein (170 aa).

Positions threonine 76 to arginine 88 are enriched in basic and acidic residues. Positions threonine 76 to lysine 170 are disordered. Residues serine 110 to proline 139 show a composition bias toward polar residues. Residues leucine 144–alanine 155 show a composition bias toward low complexity.

This sequence belongs to the herpesviridae small capsomere-interacting protein family. In terms of assembly, interacts with the major capsid protein/MCP.

It localises to the virion. It is found in the host nucleus. Functionally, participates in the assembly of the infectious particles by decorating the outer surface of the capsid shell and thus forming a layer between the capsid and the tegument. Complexes composed of the major capsid protein and small capsomere-interacting protein/SCP assemble together in the host cytoplasm and are translocated to the nucleus, where they accumulate and participate in capsid assembly. The chain is Small capsomere-interacting protein from Homo sapiens (Human).